Here is a 975-residue protein sequence, read N- to C-terminus: Protein cramped (975 aa).

Disordered stretches follow at residues 1 to 37 (MEEL…GGGA), 71 to 111 (QKMK…GSGK), 318 to 346 (AIFP…PSVA), 403 to 450 (PVAA…LMKM), and 809 to 844 (PIDR…QEPG). The span at 7-20 (QPPPPPPLPPPPSS) shows a compositional bias: pro residues. Positions 86–98 (SEREPNKKEEKAA) are enriched in basic and acidic residues. The span at 100–111 (KTPSQLKTGSGK) shows a compositional bias: polar residues. Positions 109 to 173 (SGKTTWTNVE…HYYQTYHKIC (65 aa)) constitute an SANT domain. The segment covering 410-425 (LRTESGSEKRSPETKK) has biased composition (basic and acidic residues). The segment covering 815-833 (GTSSGGISSSGSKPDSSMG) has biased composition (low complexity).

This sequence belongs to the cramped family.

Its subcellular location is the nucleus. Functionally, polycomb group (Pc-G) genes are needed to maintain expression patterns of the homeotic selector genes of the Antennapedia (Antp-C) and Bithorax (Bx-C) complexes, and hence for the maintenance of segmental determination. Can act as a modifier of position effect variegation (PEV). This chain is Protein cramped (crm), found in Drosophila sechellia (Fruit fly).